The following is a 250-amino-acid chain: NAD(P)H-quinone oxidoreductase subunit K, chloroplastic (250 aa).

Positions 61, 62, 126, and 157 each coordinate [4Fe-4S] cluster.

The protein belongs to the complex I 20 kDa subunit family. In terms of assembly, NDH is composed of at least 16 different subunits, 5 of which are encoded in the nucleus. [4Fe-4S] cluster is required as a cofactor.

It localises to the plastid. The protein localises to the chloroplast thylakoid membrane. It catalyses the reaction a plastoquinone + NADH + (n+1) H(+)(in) = a plastoquinol + NAD(+) + n H(+)(out). The enzyme catalyses a plastoquinone + NADPH + (n+1) H(+)(in) = a plastoquinol + NADP(+) + n H(+)(out). NDH shuttles electrons from NAD(P)H:plastoquinone, via FMN and iron-sulfur (Fe-S) centers, to quinones in the photosynthetic chain and possibly in a chloroplast respiratory chain. The immediate electron acceptor for the enzyme in this species is believed to be plastoquinone. Couples the redox reaction to proton translocation, and thus conserves the redox energy in a proton gradient. The chain is NAD(P)H-quinone oxidoreductase subunit K, chloroplastic from Angiopteris evecta (Mule's foot fern).